A 674-amino-acid polypeptide reads, in one-letter code: DNA ligase (674 aa).

Residues 31–35 (DYEYD), 80–81 (SL), and glutamate 110 contribute to the NAD(+) site. Residue lysine 112 is the N6-AMP-lysine intermediate of the active site. NAD(+) contacts are provided by arginine 133, glutamate 167, lysine 283, and lysine 307. Residues cysteine 401, cysteine 404, cysteine 419, and cysteine 424 each coordinate Zn(2+). Residues 584–673 (KVEKIFEGMK…SKDEVKAVLE (90 aa)) enclose the BRCT domain.

It belongs to the NAD-dependent DNA ligase family. LigA subfamily. Mg(2+) is required as a cofactor. The cofactor is Mn(2+).

The catalysed reaction is NAD(+) + (deoxyribonucleotide)n-3'-hydroxyl + 5'-phospho-(deoxyribonucleotide)m = (deoxyribonucleotide)n+m + AMP + beta-nicotinamide D-nucleotide.. Its function is as follows. DNA ligase that catalyzes the formation of phosphodiester linkages between 5'-phosphoryl and 3'-hydroxyl groups in double-stranded DNA using NAD as a coenzyme and as the energy source for the reaction. It is essential for DNA replication and repair of damaged DNA. The chain is DNA ligase from Clostridioides difficile (strain 630) (Peptoclostridium difficile).